A 116-amino-acid polypeptide reads, in one-letter code: Beta-2-microglobulin (116 aa).

Positions Met-1–Ala-19 are cleaved as a signal peptide. The 88-residue stretch at Pro-24–Ser-111 folds into the Ig-like C1-type domain. A disulfide bond links Cys-44 and Cys-99.

This sequence belongs to the beta-2-microglobulin family. In terms of assembly, heterodimer of an alpha chain and a beta chain. Beta-2-microglobulin is the beta-chain of major histocompatibility complex class I molecules.

Its subcellular location is the secreted. In terms of biological role, component of the class I major histocompatibility complex (MHC). Involved in the presentation of peptide antigens to the immune system. In Labeobarbus intermedius (Lake tana barbels), this protein is Beta-2-microglobulin (b2m).